An 89-amino-acid polypeptide reads, in one-letter code: Small ribosomal subunit protein uS17 (89 aa).

Belongs to the universal ribosomal protein uS17 family. In terms of assembly, part of the 30S ribosomal subunit.

Functionally, one of the primary rRNA binding proteins, it binds specifically to the 5'-end of 16S ribosomal RNA. The polypeptide is Small ribosomal subunit protein uS17 (Xylella fastidiosa (strain M12)).